The sequence spans 156 residues: Hemerythrin-like protein (156 aa).

Positions 54, 84, 88, 109, 113, 142, and 147 each coordinate Fe cation.

The protein belongs to the hemerythrin family.

Functionally, oxygen-binding protein. The oxygen-binding site contains two iron atoms. The chain is Hemerythrin-like protein from Nematostella vectensis (Starlet sea anemone).